The primary structure comprises 267 residues: DNA repair protein RecO (267 aa).

The protein belongs to the RecO family.

Involved in DNA repair and RecF pathway recombination. This is DNA repair protein RecO from Mesoplasma florum (strain ATCC 33453 / NBRC 100688 / NCTC 11704 / L1) (Acholeplasma florum).